The following is a 333-amino-acid chain: Nucleoid-associated protein HAPS_0704 (333 aa).

This sequence belongs to the YejK family.

It is found in the cytoplasm. The protein localises to the nucleoid. The chain is Nucleoid-associated protein HAPS_0704 from Glaesserella parasuis serovar 5 (strain SH0165) (Haemophilus parasuis).